We begin with the raw amino-acid sequence, 196 residues long: Translation initiation factor IF-3 (196 aa).

This sequence belongs to the IF-3 family. In terms of assembly, monomer.

The protein localises to the cytoplasm. Functionally, IF-3 binds to the 30S ribosomal subunit and shifts the equilibrium between 70S ribosomes and their 50S and 30S subunits in favor of the free subunits, thus enhancing the availability of 30S subunits on which protein synthesis initiation begins. This is Translation initiation factor IF-3 from Wigglesworthia glossinidia brevipalpis.